A 452-amino-acid chain; its full sequence is Flavanone 7-O-glucoside 2''-O-beta-L-rhamnosyltransferase (452 aa).

The active-site Proton acceptor is the H21. H21 serves as a coordination point for an anthocyanidin. The active-site Charge relay is the D121. The chain crosses the membrane as a helical span at residues 136-156; that stretch reads IAAILFLPLSAVACSFLLHNI. 6 residues coordinate UDP-beta-L-rhamnose: S268, V330, H347, G351, S352, and E355. Positions 407–436 form a coiled coil; the sequence is KHVVLQEEAKQIRRKANEISESMKKIGDAE.

This sequence belongs to the UDP-glycosyltransferase family. As to quaternary structure, monomer. As to expression, expressed in young fruits and leaves.

It is found in the membrane. The enzyme catalyses flavanone 7-O-beta-D-glucoside + UDP-beta-L-rhamnose = flavanone 7-O-[alpha-L-rhamnosyl-(1-&gt;2)-beta-D-glucoside] + UDP + H(+). In terms of biological role, involved in the production of the bitter neohesperidosides in citrus. Shows a strict specificity for UDP-rhamnose as donor. In Citrus maxima (Pomelo), this protein is Flavanone 7-O-glucoside 2''-O-beta-L-rhamnosyltransferase (C12RT1).